The chain runs to 380 residues: Epoxyqueuosine reductase (380 aa).

Asp139 (proton donor) is an active-site residue. In terms of domain architecture, 4Fe-4S ferredoxin-type 1 spans 181 to 213; the sequence is IPFEPDDPLLDSCGDCTICVDRCPTSALVGNGQ. The [4Fe-4S] cluster site is built by Cys193, Cys196, Cys199, Cys203, Cys219, Cys245, Cys248, and Cys252. The 4Fe-4S ferredoxin-type 2 domain maps to 234–263; the sequence is YRYKIGNRLYGCDTCQQVCPKNRGINTEQD.

The protein belongs to the QueG family. Monomer. Cob(II)alamin is required as a cofactor. It depends on [4Fe-4S] cluster as a cofactor.

It localises to the cytoplasm. The enzyme catalyses epoxyqueuosine(34) in tRNA + AH2 = queuosine(34) in tRNA + A + H2O. The protein operates within tRNA modification; tRNA-queuosine biosynthesis. Its function is as follows. Catalyzes the conversion of epoxyqueuosine (oQ) to queuosine (Q), which is a hypermodified base found in the wobble positions of tRNA(Asp), tRNA(Asn), tRNA(His) and tRNA(Tyr). In Staphylococcus aureus (strain NCTC 8325 / PS 47), this protein is Epoxyqueuosine reductase.